The chain runs to 337 residues: Large ribosomal subunit protein uL3 (337 aa).

It belongs to the universal ribosomal protein uL3 family. In terms of assembly, part of the 50S ribosomal subunit. Forms a cluster with proteins L14 and L24e.

Functionally, one of the primary rRNA binding proteins, it binds directly near the 3'-end of the 23S rRNA, where it nucleates assembly of the 50S subunit. In Methanospirillum hungatei JF-1 (strain ATCC 27890 / DSM 864 / NBRC 100397 / JF-1), this protein is Large ribosomal subunit protein uL3.